The primary structure comprises 128 residues: Large ribosomal subunit protein bL17 (128 aa).

It belongs to the bacterial ribosomal protein bL17 family. As to quaternary structure, part of the 50S ribosomal subunit. Contacts protein L32.

The sequence is that of Large ribosomal subunit protein bL17 from Streptococcus agalactiae serotype Ia (strain ATCC 27591 / A909 / CDC SS700).